A 385-amino-acid polypeptide reads, in one-letter code: Acetate kinase (385 aa).

A Mg(2+)-binding site is contributed by asparagine 9. Lysine 16 contributes to the ATP binding site. Arginine 87 is a substrate binding site. Aspartate 144 serves as the catalytic Proton donor/acceptor. Residues histidine 202–glycine 206 and aspartate 277–arginine 279 contribute to the ATP site. Glutamate 373 provides a ligand contact to Mg(2+).

The protein belongs to the acetokinase family. As to quaternary structure, homodimer. Mg(2+) serves as cofactor. It depends on Mn(2+) as a cofactor.

The protein localises to the cytoplasm. It catalyses the reaction acetate + ATP = acetyl phosphate + ADP. It participates in metabolic intermediate biosynthesis; acetyl-CoA biosynthesis; acetyl-CoA from acetate: step 1/2. Catalyzes the formation of acetyl phosphate from acetate and ATP. Can also catalyze the reverse reaction. This chain is Acetate kinase, found in Rickettsia prowazekii (strain Madrid E).